A 204-amino-acid polypeptide reads, in one-letter code: Ribonuclease HII (204 aa).

An RNase H type-2 domain is found at 1–197 (MILGIDEAGR…KNRILNPKLL (197 aa)). Residues Asp6, Glu7, and Asp103 each coordinate a divalent metal cation.

Belongs to the RNase HII family. Mn(2+) serves as cofactor. Mg(2+) is required as a cofactor.

It is found in the cytoplasm. It catalyses the reaction Endonucleolytic cleavage to 5'-phosphomonoester.. Functionally, endonuclease that specifically degrades the RNA of RNA-DNA hybrids. The polypeptide is Ribonuclease HII (Helicobacter pylori (strain G27)).